Reading from the N-terminus, the 769-residue chain is Integrin beta-2 (769 aa).

Positions 1–22 are cleaved as a signal peptide; sequence MLCRCSPLLLLVGLLTLRSALS. At glutamine 23 the chain carries Pyrrolidone carboxylic acid. Topologically, residues 23-700 are extracellular; that stretch reads QECAKYKVST…ETRECVKGPN (678 aa). The region spanning 24 to 74 is the PSI domain; sequence ECAKYKVSTCRDCIESGPGCAWCQKLNFSGQGEPDSVRCDTREQLLAKGCV. 28 disulfides stabilise this stretch: cysteine 25–cysteine 43, cysteine 33–cysteine 447, cysteine 36–cysteine 62, cysteine 46–cysteine 73, cysteine 191–cysteine 198, cysteine 246–cysteine 286, cysteine 386–cysteine 400, cysteine 420–cysteine 445, cysteine 449–cysteine 467, cysteine 459–cysteine 470, cysteine 472–cysteine 481, cysteine 483–cysteine 514, cysteine 497–cysteine 512, cysteine 506–cysteine 517, cysteine 519–cysteine 534, cysteine 536–cysteine 559, cysteine 541–cysteine 557, cysteine 549–cysteine 562, cysteine 564–cysteine 573, cysteine 575–cysteine 598, cysteine 582–cysteine 596, cysteine 590–cysteine 601, cysteine 603–cysteine 612, cysteine 615–cysteine 618, cysteine 622–cysteine 662, cysteine 628–cysteine 647, cysteine 631–cysteine 643, and cysteine 670–cysteine 695. Residues asparagine 50 and asparagine 116 are each glycosylated (N-linked (GlcNAc...) asparagine). One can recognise a VWFA domain in the interval 124-363; the sequence is GYPIDLYYLM…ELIKNAYNKL (240 aa). Residues serine 136 and serine 138 each coordinate Mg(2+). Ca(2+) is bound by residues serine 138, aspartate 141, aspartate 142, and aspartate 173. Ca(2+) is bound by residues asparagine 229, aspartate 231, proline 233, and glutamate 234. Glutamate 234 contacts Mg(2+). N-linked (GlcNAc...) asparagine glycosylation is present at asparagine 254. Residues aspartate 264 and glutamate 347 each contribute to the Ca(2+) site. Residues 397–399 carry the Cell attachment site motif; that stretch reads RGD. I-EGF domains lie at 449-482, 483-535, 536-574, and 575-613; these read CGDS…KHCE, CQTQ…QFCE, CDNM…SACQ, and CLKS…PLCT. Residue asparagine 501 is glycosylated (N-linked (GlcNAc...) asparagine). The N-linked (GlcNAc...) asparagine glycan is linked to asparagine 642. A helical membrane pass occupies residues 701 to 723; the sequence is IAAIVGGTVGGVVLVGIFLLVIW. Topologically, residues 724 to 769 are cytoplasmic; that stretch reads KVLTHLSDLREYKRFEKEKLKSQWNNDNPLFKSATTTVMNPKFAER. Serine 745 and serine 756 each carry phosphoserine. Phosphothreonine occurs at positions 758 and 760.

Belongs to the integrin beta chain family. In terms of assembly, heterodimer of an alpha and a beta subunit. The ITGB2 beta subunit associates with the ITGAL, ITGAM, ITGAX or ITGAD alpha subunits. Found in a complex with CD177 and ITGAM/CD11b. Interacts with FGR. Interacts with COPS5 and RANBP9. Interacts with FLNA (via filamin repeats 4, 9, 12, 17, 19, 21, and 23). Interacts with THBD. Post-translationally, both Ser-745 and Ser-756 become phosphorylated when T-cells are exposed to phorbol esters. Phosphorylation on Thr-758 (but not on Ser-756) allows interaction with 14-3-3 proteins.

It is found in the cell membrane. Its subcellular location is the membrane raft. Integrin ITGAL/ITGB2 is a receptor for ICAM1, ICAM2, ICAM3 and ICAM4. Integrin ITGAL/ITGB2 is also a receptor for the secreted form of ubiquitin-like protein ISG15; the interaction is mediated by ITGAL. Integrins ITGAM/ITGB2 and ITGAX/ITGB2 are receptors for the iC3b fragment of the third complement component and for fibrinogen. Integrin ITGAX/ITGB2 recognizes the sequence G-P-R in fibrinogen alpha-chain. Integrin ITGAM/ITGB2 recognizes P1 and P2 peptides of fibrinogen gamma chain. Integrin ITGAM/ITGB2 is also a receptor for factor X. Integrin ITGAD/ITGB2 is a receptor for ICAM3 and VCAM1. Contributes to natural killer cell cytotoxicity. Involved in leukocyte adhesion and transmigration of leukocytes including T-cells and neutrophils. Triggers neutrophil transmigration during lung injury through PTK2B/PYK2-mediated activation. Integrin alpha-L/beta-2 in association with ICAM3, contributes to apoptotic neutrophil phagocytosis by macrophages. The chain is Integrin beta-2 (ITGB2) from Sus scrofa (Pig).